A 757-amino-acid polypeptide reads, in one-letter code: E3 ubiquitin-protein ligase RNF12-B (757 aa).

The segment covering 1-10 has biased composition (polar residues); that stretch reads MESADSTGKG. Disordered stretches follow at residues 1 to 29, 68 to 519, and 619 to 652; these read MESADSTGKGSTEQSESQRQSQMDRLDRE, LQQI…TYES, and EPAEPVAPVESDEGSNVATSATRREGRNSRGGVT. The segment covering 11 to 21 has biased composition (low complexity); sequence STEQSESQRQS. Polar residues-rich tracts occupy residues 110–138 and 147–163; these read SVRQTGNTTRSGQRGNQSWRAVSRTNPNS and INVNRTSGTASMPSLDQ. Repeat copies occupy residues 197 to 202, 203 to 208, 209 to 214, 215 to 220, 221 to 226, 227 to 232, 237 to 242, 243 to 248, 249 to 254, 255 to 260, 261 to 266, 267 to 272, 273 to 278, 279 to 284, 285 to 290, 291 to 296, 297 to 302, 303 to 308, 309 to 314, 315 to 320, and 321 to 326. The 21 X 6 AA approximate repeats of P-[EV]-S-V-[PA]-[EV] stretch occupies residues 197 to 326; it reads PESVDEPVSV…SVPVPESVPV (130 aa). Residues 202–237 are compositionally biased toward low complexity; that stretch reads EPVSVAEPVSVAEPVSVAEPESVAEPESVAASVPVP. Acidic residues predominate over residues 245–313; sequence SVPEPESVPE…ESVPEPESIA (69 aa). The segment covering 314-327 has biased composition (low complexity); the sequence is EPESVPVPESVPVA. Over residues 352-367 the composition is skewed to basic and acidic residues; it reads RSPDQRRTRARTDRSR. A compositionally biased stretch (polar residues) spans 383–392; that stretch reads HSSSQTVDAS. Residues 408–424 are compositionally biased toward low complexity; it reads SSQVHSSSSNETEGSSR. Residues 428-452 show a composition bias toward polar residues; it reads HITARQQALGTEGQSQSTVHLSNPE. Residues 453 to 466 show a composition bias toward low complexity; the sequence is SRSSSQTPQTDSPS. The segment covering 467–476 has biased composition (polar residues); sequence NAETTGTGQR. A compositionally biased stretch (basic and acidic residues) spans 490–500; that stretch reads RPGDYRQRDSI. Over residues 501–517 the composition is skewed to polar residues; that stretch reads ANRTRSRSQTPNNTVTY. The segment at 703–744 adopts an RING-type; atypical zinc-finger fold; sequence CSVCITEYTEGNKLRKLPCSHEYHIHCIDRWLSENSTCPICR. Positions 754 to 757 match the PDZ-binding motif; it reads ESIV.

It belongs to the RNF12 family. Forms homodimers through the C-terminal region. The N-terminus interacts with the homeobox of LIM/homeobox factor lhx1/lim1, with lhx3/lim3 and lhx5/lim5, and with the N-terminus of ldb1. Shows overlapping expression with lhx1/lim1 and ldb1 in the gastrula mesoderm, and expression overlaps with ldb1 throughout early embryogenesis. After gastrulation, expression is gradually restricted to tissues originated from the ectoderm, the neuroectoderm, neural crest and epidermis, and subsequently to the neural tube as well as the head and tailbud region.

It is found in the nucleus. It catalyses the reaction S-ubiquitinyl-[E2 ubiquitin-conjugating enzyme]-L-cysteine + [acceptor protein]-L-lysine = [E2 ubiquitin-conjugating enzyme]-L-cysteine + N(6)-ubiquitinyl-[acceptor protein]-L-lysine.. It participates in protein modification; protein ubiquitination. Functionally, acts as an E3 ubiquitin-protein ligase specific for ldb1, mediating ubiquitination and proteasome-dependent degradation of excess ldb1 in a RING-dependent manner. Does not degrade ldb1 bound to lhx1/lim1, nor lim1 itself and thus contributes to the establishment of proper ldb1-lhx1/lim1 stoichiometry and the formation of a ldb1-lhx1/lim1 complex. Interferes with Spemann organizer function and suppresses secondary axis formation induced by ldb1 and lhx1/lim1. In Xenopus laevis (African clawed frog), this protein is E3 ubiquitin-protein ligase RNF12-B (rnf12-b).